The following is a 663-amino-acid chain: RING finger protein 145 (663 aa).

A run of 14 helical transmembrane segments spans residues 53–73 (YLAL…LTLP), 77–97 (LVQL…HQIS), 123–143 (FTTA…VMKT), 146–166 (IWLF…VPLE), 168–188 (IVII…YFLG), 205–222 (LVQV…MSLW), 225–245 (LVVP…QIYS), 275–295 (YSLL…LTLC), 316–336 (TEGV…LQVV), 340–360 (FLLS…MLEI), 384–404 (SLCL…CQFF), 410–430 (LLII…TLFI), 460–480 (LLEF…TIFG), and 482–502 (WTVM…WLRA). The short motif at 81–84 (YLYF) is the YLYF motif element. The active site involves cysteine 537. Residues 537-575 (CAICYQDMKSAVITPCSHFFHAGCLKKWLYVQDTCPLCH) form an RING-type; atypical zinc finger. The interval 587 to 663 (LGTEAAPQPP…EGEVCPVESA (77 aa)) is disordered. A compositionally biased stretch (polar residues) spans 619-628 (GTGTQEGSGD).

In terms of assembly, interacts (via YLYF motif) with INSIG1 and INSIG2.

It is found in the endoplasmic reticulum membrane. It carries out the reaction S-ubiquitinyl-[E2 ubiquitin-conjugating enzyme]-L-cysteine + [acceptor protein]-L-lysine = [E2 ubiquitin-conjugating enzyme]-L-cysteine + N(6)-ubiquitinyl-[acceptor protein]-L-lysine.. Functionally, E3 ubiquitin ligase that catalyzes the direct transfer of ubiquitin from E2 ubiquitin-conjugating enzyme to a specific substrate. In response to bacterial infection, negatively regulates the phagocyte oxidative burst by controlling the turnover of the NADPH oxidase complex subunits. Promotes monoubiquitination of CYBA and 'Lys-48'-linked polyubiquitination and degradation of CYBB NADPH oxidase catalytic subunits, both essential for the generation of antimicrobial reactive oxygen species. Involved in the maintenance of cholesterol homeostasis. In response to high sterol concentrations ubiquitinates HMGCR, a rate-limiting enzyme in cholesterol biosynthesis, and targets it for degradation. The interaction with INSIG1 is required for this function. In addition, triggers ubiquitination of SCAP, likely inhibiting its transport to the Golgi apparatus and the subsequent processing/maturation of SREBPF2, ultimately down-regulating cholesterol biosynthesis. The chain is RING finger protein 145 from Mus musculus (Mouse).